The primary structure comprises 157 residues: Nascent polypeptide-associated complex subunit beta-1 (157 aa).

Disordered regions lie at residues 19-42 (KVGG…KDDT) and 126-157 (EKHE…ADVE). Residues 38–103 (NKDDTKLQSQ…PQEKNLQDLF (66 aa)) form the NAC-A/B domain. Residues 126–142 (EKHEAKAPADAEKKDEA) are compositionally biased toward basic and acidic residues. Phosphothreonine is present on Thr-151.

The protein belongs to the NAC-beta family. As to quaternary structure, part of the nascent polypeptide-associated complex (NAC), consisting of EGD2 and either EGD1 or BTT1. NAC associates with ribosomes via EGD1 or BTT1, and with the CCR4-NOT complex.

The protein resides in the cytoplasm. It localises to the nucleus. Its function is as follows. Component of the nascent polypeptide-associated complex (NAC), a dynamic component of the ribosomal exit tunnel, protecting the emerging polypeptides from interaction with other cytoplasmic proteins to ensure appropriate nascent protein targeting. The NAC complex also promotes mitochondrial protein import by enhancing productive ribosome interactions with the outer mitochondrial membrane and blocks the inappropriate interaction of ribosomes translating non-secretory nascent polypeptides with translocation sites in the membrane of the endoplasmic reticulum. EGD1 may act as a transcription factor that exert a negative effect on the expression of several genes that are transcribed by RNA polymerase II. This is Nascent polypeptide-associated complex subunit beta-1 (EGD1) from Saccharomyces cerevisiae (strain YJM789) (Baker's yeast).